A 229-amino-acid chain; its full sequence is Lipoprotein-releasing system ATP-binding protein LolD 1 (229 aa).

The ABC transporter domain occupies 2-229 (LVVSELSKSY…VRRGRFGITA (228 aa)). An ATP-binding site is contributed by 38–45 (GPSGSGKT).

It belongs to the ABC transporter superfamily. Lipoprotein translocase (TC 3.A.1.125) family. In terms of assembly, the complex is composed of two ATP-binding proteins (LolD) and two transmembrane proteins (LolC and LolE).

The protein localises to the cell inner membrane. Its function is as follows. Part of the ABC transporter complex LolCDE involved in the translocation of mature outer membrane-directed lipoproteins, from the inner membrane to the periplasmic chaperone, LolA. Responsible for the formation of the LolA-lipoprotein complex in an ATP-dependent manner. The sequence is that of Lipoprotein-releasing system ATP-binding protein LolD 1 from Rhodopirellula baltica (strain DSM 10527 / NCIMB 13988 / SH1).